The sequence spans 212 residues: Large ribosomal subunit protein uL3 (212 aa).

Residues 119–146 are disordered; that stretch reads YQGNIKRWGQSRGPETHGSRYHRIPGSM.

It belongs to the universal ribosomal protein uL3 family. As to quaternary structure, part of the 50S ribosomal subunit. Forms a cluster with proteins L14 and L19.

In terms of biological role, one of the primary rRNA binding proteins, it binds directly near the 3'-end of the 23S rRNA, where it nucleates assembly of the 50S subunit. In Lactobacillus helveticus (strain DPC 4571), this protein is Large ribosomal subunit protein uL3.